The following is a 200-amino-acid chain: Large ribosomal subunit protein uL4 (200 aa).

The interval 42 to 65 is disordered; the sequence is TRAQKTRSEVSGGGAKPWRQKGTG.

The protein belongs to the universal ribosomal protein uL4 family. Part of the 50S ribosomal subunit.

One of the primary rRNA binding proteins, this protein initially binds near the 5'-end of the 23S rRNA. It is important during the early stages of 50S assembly. It makes multiple contacts with different domains of the 23S rRNA in the assembled 50S subunit and ribosome. Its function is as follows. Forms part of the polypeptide exit tunnel. The chain is Large ribosomal subunit protein uL4 from Vibrio parahaemolyticus serotype O3:K6 (strain RIMD 2210633).